Consider the following 162-residue polypeptide: Epoxidase pydX (162 aa).

An N-terminal signal peptide occupies residues Met-1–Ala-26. A run of 2 helical transmembrane segments spans residues Trp-62–Gly-82 and Thr-89–Met-109. N-linked (GlcNAc...) asparagine glycans are attached at residues Asn-127 and Asn-139.

This sequence belongs to the epoxidase xenD family.

The protein resides in the membrane. The protein operates within mycotoxin biosynthesis. Functionally, epoxidase; part of the gene cluster that mediates the biosynthesis of pyrrocidines, fungal natural products containing a macrocyclic para-cyclophane connected to a decahydrofluorene ring system that show potent antibiotic activities toward Gram-negative bacteria. Within the pathway, pydX functions synergistically with pydB, pydE and pydZ to form the cyclophane. The pathway begins with the PKS-NRPS pydA which, with the help of the trans-enoyl reductase pydC, synthesizes the polyketide-tyrosyl acyl thioester product which can be reductively off-loaded by the terminal reductase (R) domain in pydA. The alpha/beta hydrolase pydG is then required to catalyze the subsequent Knoevenagel condensation that affords the 3-pyrrolin-2-one ring, whereas the four proteins pydB, pydE, pydX and pydZ then function synergistically to form the cyclophane. PydB and the membrane-bound pydX and pydZ are lipid-binding proteins that can sequester and mold the pdyG product into the inverse S-shape. Binding of the medium chain reductase pydE to the complex would trigger the cascade oxidative cyclization. PydY is involved in the Diels-Alder cycloaddition that forms the decahydrofluorene core. Additional non-enzymatic hydroxylation yields pyrrocidine A2 which can be further reduced into pyrrocidine B by an endogenous reductase. This chain is Epoxidase pydX, found in Acremonium sp.